The primary structure comprises 164 residues: UPF0303 protein Smed_2872 (164 aa).

The protein belongs to the UPF0303 family.

The protein is UPF0303 protein Smed_2872 of Sinorhizobium medicae (strain WSM419) (Ensifer medicae).